A 211-amino-acid polypeptide reads, in one-letter code: Uracil phosphoribosyltransferase (211 aa).

5-phospho-alpha-D-ribose 1-diphosphate-binding positions include arginine 78, arginine 103, and 130 to 138 (DPMLATGGT). Residues isoleucine 195 and 200-202 (GDA) each bind uracil. Aspartate 201 contributes to the 5-phospho-alpha-D-ribose 1-diphosphate binding site.

The protein belongs to the UPRTase family. Requires Mg(2+) as cofactor.

It catalyses the reaction UMP + diphosphate = 5-phospho-alpha-D-ribose 1-diphosphate + uracil. It participates in pyrimidine metabolism; UMP biosynthesis via salvage pathway; UMP from uracil: step 1/1. Its activity is regulated as follows. Allosterically activated by GTP. Catalyzes the conversion of uracil and 5-phospho-alpha-D-ribose 1-diphosphate (PRPP) to UMP and diphosphate. The sequence is that of Uracil phosphoribosyltransferase from Paenarthrobacter aurescens (strain TC1).